The primary structure comprises 199 residues: V-type ATP synthase subunit E (199 aa).

It belongs to the V-ATPase E subunit family.

In terms of biological role, produces ATP from ADP in the presence of a proton gradient across the membrane. The sequence is that of V-type ATP synthase subunit E from Borreliella afzelii (strain PKo) (Borrelia afzelii).